Here is a 123-residue protein sequence, read N- to C-terminus: Keratin-associated protein 2-2 (123 aa).

An 11 X 5 AA repeats of C-C-[CDPQRWG]-[APRS]-[CIPSTVD] region spans residues 5-112 (CCGSTFSSLS…SVQSPCGQPT (108 aa)).

The protein belongs to the KRTAP type 2 family. As to quaternary structure, interacts with hair keratins.

Its function is as follows. In the hair cortex, hair keratin intermediate filaments are embedded in an interfilamentous matrix, consisting of hair keratin-associated proteins (KRTAP), which are essential for the formation of a rigid and resistant hair shaft through their extensive disulfide bond cross-linking with abundant cysteine residues of hair keratins. The matrix proteins include the high-sulfur and high-glycine-tyrosine keratins. The protein is Keratin-associated protein 2-2 (KRTAP2-2) of Homo sapiens (Human).